Here is a 482-residue protein sequence, read N- to C-terminus: Keratin, type I cytoskeletal 39 (482 aa).

The disordered stretch occupies residues 1–24 (MDTKGSTVTISSSTPPQNCSGNTN). The segment at 1–91 (MDTKGSTVTI…RCTEGINTHE (91 aa)) is head. In terms of domain architecture, IF rod spans 91–402 (EKETMQILNE…SLLESLDGRL (312 aa)). Positions 92 to 126 (KETMQILNERLANYLEKVRMLEGENADLEDKIQEA) are coil 1A. The linker 1 stretch occupies residues 127 to 137 (CSKALPILCPD). The segment at 138-238 (YLSYYTTIEE…HEEEVNSLQC (101 aa)) is coil 1B. A linker 12 region spans residues 239–254 (QLGDRINIEVTAAPSV). Residues 255-398 (DLNQILQEMR…ATYRSLLESL (144 aa)) are coil 2. Residues 399-482 (DGRLPCNPCA…PCYITRATKV (84 aa)) are tail.

The protein belongs to the intermediate filament family. In terms of assembly, heterotetramer of two type I and two type II keratins.

In terms of biological role, may play a role in late hair differentiation. This Mus musculus (Mouse) protein is Keratin, type I cytoskeletal 39 (Krt39).